The sequence spans 290 residues: ATP synthase gamma chain (290 aa).

This sequence belongs to the ATPase gamma chain family. As to quaternary structure, F-type ATPases have 2 components, CF(1) - the catalytic core - and CF(0) - the membrane proton channel. CF(1) has five subunits: alpha(3), beta(3), gamma(1), delta(1), epsilon(1). CF(0) has three main subunits: a, b and c.

The protein resides in the cell membrane. Its function is as follows. Produces ATP from ADP in the presence of a proton gradient across the membrane. The gamma chain is believed to be important in regulating ATPase activity and the flow of protons through the CF(0) complex. The polypeptide is ATP synthase gamma chain (Roseiflexus castenholzii (strain DSM 13941 / HLO8)).